The chain runs to 591 residues: V-type ATP synthase alpha chain (591 aa).

An ATP-binding site is contributed by 242-249; the sequence is GPFGAGKT.

It belongs to the ATPase alpha/beta chains family.

The catalysed reaction is ATP + H2O + 4 H(+)(in) = ADP + phosphate + 5 H(+)(out). Produces ATP from ADP in the presence of a proton gradient across the membrane. The V-type alpha chain is a catalytic subunit. This Chlamydia caviae (strain ATCC VR-813 / DSM 19441 / 03DC25 / GPIC) (Chlamydophila caviae) protein is V-type ATP synthase alpha chain.